A 568-amino-acid polypeptide reads, in one-letter code: Glucose-6-phosphate isomerase, cytosolic 1 (568 aa).

Glutamate 360 functions as the Proton donor in the catalytic mechanism. Catalysis depends on residues histidine 391 and lysine 516.

The protein belongs to the GPI family. In terms of assembly, homodimer.

The protein resides in the cytoplasm. The catalysed reaction is alpha-D-glucose 6-phosphate = beta-D-fructose 6-phosphate. The protein operates within carbohydrate degradation; glycolysis; D-glyceraldehyde 3-phosphate and glycerone phosphate from D-glucose: step 2/4. In Clarkia arcuata (Glandular clarkia), this protein is Glucose-6-phosphate isomerase, cytosolic 1 (PGIC1).